We begin with the raw amino-acid sequence, 857 residues long: DNA mismatch repair protein MutS (857 aa).

608-615 (GPNMSGKS) lines the ATP pocket.

It belongs to the DNA mismatch repair MutS family.

Its function is as follows. This protein is involved in the repair of mismatches in DNA. It is possible that it carries out the mismatch recognition step. This protein has a weak ATPase activity. The polypeptide is DNA mismatch repair protein MutS (Lactobacillus gasseri (strain ATCC 33323 / DSM 20243 / BCRC 14619 / CIP 102991 / JCM 1131 / KCTC 3163 / NCIMB 11718 / NCTC 13722 / AM63)).